Consider the following 485-residue polypeptide: Glutamyl-tRNA(Gln) amidotransferase subunit A (485 aa).

Active-site charge relay system residues include lysine 78 and serine 153. The Acyl-ester intermediate role is filled by serine 177.

It belongs to the amidase family. GatA subfamily. As to quaternary structure, heterotrimer of A, B and C subunits.

It carries out the reaction L-glutamyl-tRNA(Gln) + L-glutamine + ATP + H2O = L-glutaminyl-tRNA(Gln) + L-glutamate + ADP + phosphate + H(+). In terms of biological role, allows the formation of correctly charged Gln-tRNA(Gln) through the transamidation of misacylated Glu-tRNA(Gln) in organisms which lack glutaminyl-tRNA synthetase. The reaction takes place in the presence of glutamine and ATP through an activated gamma-phospho-Glu-tRNA(Gln). In Syntrophus aciditrophicus (strain SB), this protein is Glutamyl-tRNA(Gln) amidotransferase subunit A.